Consider the following 351-residue polypeptide: Tropomodulin-2 (351 aa).

A Phosphoserine modification is found at serine 25.

Belongs to the tropomodulin family. In terms of assembly, binds to the N-terminus of tropomyosin and to actin. Binds to TMBr3 as well as to other low molecular mass tropomyosins (TM5a or TM5), but not to high molecular mass tropomyosins (TM2 or TMBr1). As to expression, neuronal-tissue specific.

The protein resides in the cytoplasm. The protein localises to the cytoskeleton. Functionally, blocks the elongation and depolymerization of the actin filaments at the pointed end. The Tmod/TM complex contributes to the formation of the short actin protofilament, which in turn defines the geometry of the membrane skeleton. The sequence is that of Tropomodulin-2 (Tmod2) from Rattus norvegicus (Rat).